A 157-amino-acid polypeptide reads, in one-letter code: Cell number regulator 10 (157 aa).

2 consecutive transmembrane segments (helical) span residues 41 to 57 (DCGLCCLTCWCPCITFG) and 66 to 83 (GATSCGTAGALYAVLAYF).

The protein belongs to the cornifelin family. In terms of tissue distribution, expressed in roots, leaves, stalks, immature ears and silks.

Its subcellular location is the membrane. The polypeptide is Cell number regulator 10 (CNR10) (Zea mays (Maize)).